Consider the following 257-residue polypeptide: L-aspartate dehydrogenase (257 aa).

Residues A124 and N180 each contribute to the NAD(+) site. The active site involves H208.

It belongs to the L-aspartate dehydrogenase family.

It catalyses the reaction L-aspartate + NADP(+) + H2O = oxaloacetate + NH4(+) + NADPH + H(+). The catalysed reaction is L-aspartate + NAD(+) + H2O = oxaloacetate + NH4(+) + NADH + H(+). It functions in the pathway cofactor biosynthesis; NAD(+) biosynthesis; iminoaspartate from L-aspartate (dehydrogenase route): step 1/1. Specifically catalyzes the NAD or NADP-dependent dehydrogenation of L-aspartate to iminoaspartate. The polypeptide is L-aspartate dehydrogenase (Methanothermobacter thermautotrophicus (strain ATCC 29096 / DSM 1053 / JCM 10044 / NBRC 100330 / Delta H) (Methanobacterium thermoautotrophicum)).